A 269-amino-acid chain; its full sequence is MKSISSYLSFAHMNITHTTEQHAENQPHWKTILDIAPFVSITFPAIMCLIFDEDSFEESPFLRFITLLLPFSYSAVQYALLYTNWKSHNKPEPILHTTLYYTLSLLLLAFTIISILSIIPFSLNEWDHAASFFYPIVLPSFTVPPAYLLSSSYFLVPRQIRLTDTVISILISVCSIVNVLLVFKEFNYYPYSAIISSISVLLQLLSEKHCLFKQSPPSTASSRAAVLILTLILAVLVYTFLGYGAIYILDDHFHLLGKMKSILPSEPHQ.

This sequence belongs to the UPF0328 family.

This Encephalitozoon cuniculi (strain GB-M1) (Microsporidian parasite) protein is UPF0328 protein ECU03_0020.